The primary structure comprises 419 residues: UDP-N-acetylglucosamine 1-carboxyvinyltransferase 2 (419 aa).

22–23 (KN) is a binding site for phosphoenolpyruvate. R92 is a binding site for UDP-N-acetyl-alpha-D-glucosamine. The active-site Proton donor is the C116. C116 carries the post-translational modification 2-(S-cysteinyl)pyruvic acid O-phosphothioketal. Residues 121-125 (RPIDL), D306, and I328 each bind UDP-N-acetyl-alpha-D-glucosamine.

Belongs to the EPSP synthase family. MurA subfamily.

It is found in the cytoplasm. The enzyme catalyses phosphoenolpyruvate + UDP-N-acetyl-alpha-D-glucosamine = UDP-N-acetyl-3-O-(1-carboxyvinyl)-alpha-D-glucosamine + phosphate. Its pathway is cell wall biogenesis; peptidoglycan biosynthesis. In terms of biological role, cell wall formation. Adds enolpyruvyl to UDP-N-acetylglucosamine. In Streptococcus mutans serotype c (strain ATCC 700610 / UA159), this protein is UDP-N-acetylglucosamine 1-carboxyvinyltransferase 2.